We begin with the raw amino-acid sequence, 297 residues long: Probable lipid kinase YegS-like (297 aa).

Positions 2 to 131 (STFPASLLIL…IDIARVNDKT (130 aa)) constitute a DAGKc domain. Residues T40, 66–72 (GDGTINE), and T93 each bind ATP. L213, D216, and L218 together coordinate Mg(2+). E269 acts as the Proton acceptor in catalysis.

The protein belongs to the diacylglycerol/lipid kinase family. YegS lipid kinase subfamily. Mg(2+) is required as a cofactor. It depends on Ca(2+) as a cofactor.

It localises to the cytoplasm. In terms of biological role, probably phosphorylates lipids; the in vivo substrate is unknown. This chain is Probable lipid kinase YegS-like, found in Klebsiella pneumoniae (strain 342).